Here is a 201-residue protein sequence, read N- to C-terminus: 3-isopropylmalate dehydratase small subunit (201 aa).

The protein belongs to the LeuD family. LeuD type 1 subfamily. In terms of assembly, heterodimer of LeuC and LeuD.

It catalyses the reaction (2R,3S)-3-isopropylmalate = (2S)-2-isopropylmalate. The protein operates within amino-acid biosynthesis; L-leucine biosynthesis; L-leucine from 3-methyl-2-oxobutanoate: step 2/4. Its function is as follows. Catalyzes the isomerization between 2-isopropylmalate and 3-isopropylmalate, via the formation of 2-isopropylmaleate. This chain is 3-isopropylmalate dehydratase small subunit, found in Shewanella woodyi (strain ATCC 51908 / MS32).